Consider the following 635-residue polypeptide: Threonine--tRNA ligase (635 aa).

In terms of domain architecture, TGS spans 1–61 (MIKITLKDGS…ENDCTLNLLT (61 aa)). The tract at residues 242–532 (DHRKLGRELD…LTEHYAGAFP (291 aa)) is catalytic. Zn(2+) is bound by residues Cys-333, His-384, and His-509.

The protein belongs to the class-II aminoacyl-tRNA synthetase family. As to quaternary structure, homodimer. It depends on Zn(2+) as a cofactor.

The protein localises to the cytoplasm. It catalyses the reaction tRNA(Thr) + L-threonine + ATP = L-threonyl-tRNA(Thr) + AMP + diphosphate + H(+). Catalyzes the attachment of threonine to tRNA(Thr) in a two-step reaction: L-threonine is first activated by ATP to form Thr-AMP and then transferred to the acceptor end of tRNA(Thr). Also edits incorrectly charged L-seryl-tRNA(Thr). The protein is Threonine--tRNA ligase of Acetivibrio thermocellus (strain ATCC 27405 / DSM 1237 / JCM 9322 / NBRC 103400 / NCIMB 10682 / NRRL B-4536 / VPI 7372) (Clostridium thermocellum).